The sequence spans 154 residues: Urease accessory protein UreE (154 aa).

The protein belongs to the UreE family.

Its subcellular location is the cytoplasm. Functionally, involved in urease metallocenter assembly. Binds nickel. Probably functions as a nickel donor during metallocenter assembly. This is Urease accessory protein UreE from Prochlorococcus marinus subsp. pastoris (strain CCMP1986 / NIES-2087 / MED4).